The chain runs to 306 residues: Large ribosomal subunit protein uL2m (306 aa).

Residues 1-60 (MALRVVTRALGSLSLTPRIAAVPGPSLLPAAQVTNNVLLQLPSASMLLPSRPLLTSVALS) constitute a mitochondrion transit peptide.

Belongs to the universal ribosomal protein uL2 family. As to quaternary structure, component of the mitochondrial ribosome large subunit (39S) which comprises a 16S rRNA and about 50 distinct proteins.

The protein localises to the mitochondrion. In Bos taurus (Bovine), this protein is Large ribosomal subunit protein uL2m (MRPL2).